A 648-amino-acid polypeptide reads, in one-letter code: Phosphatidylinositol-3,5-bisphosphate 3-phosphatase MTMR14 (648 aa).

The segment covering 1 to 19 (MAGARAAAAASAGSTASSG) has biased composition (low complexity). Positions 1–27 (MAGARAAAAASAGSTASSGSPPPQEPG) are disordered. At Lys193 the chain carries N6-acetyllysine. Asn225 and Asn240 each carry an N-linked (GlcNAc...) asparagine glycan. Cys329 functions as the Phosphocysteine intermediate in the catalytic mechanism. The a 1,2-diacyl-sn-glycero-3-phospho-(1D-myo-inositol-3,5-bisphosphate) site is built by Gly332, Trp333, Asp334, Arg335, and Arg381. A 1,2-diacyl-sn-glycero-3-phospho-(1D-myo-inositol-3-phosphate) contacts are provided by Gly332, Trp333, Asp334, Arg335, and Arg381. Residues 471 to 544 (PTQAAWRKSH…PRSVDHPLPG (74 aa)) form a disordered region. A compositionally biased stretch (basic and acidic residues) spans 494–506 (PSEERLPSHHGLT). Ser516 is modified (phosphoserine). Residue Asn517 is glycosylated (N-linked (GlcNAc...) asparagine). Phosphoserine occurs at positions 528, 578, and 622. At Arg636 the chain carries Omega-N-methylarginine.

It belongs to the protein-tyrosine phosphatase family. Non-receptor class myotubularin subfamily.

It is found in the cytoplasm. The enzyme catalyses a 1,2-diacyl-sn-glycero-3-phospho-(1D-myo-inositol-3,5-bisphosphate) + H2O = a 1,2-diacyl-sn-glycero-3-phospho-(1D-myo-inositol-5-phosphate) + phosphate. It carries out the reaction a 1,2-diacyl-sn-glycero-3-phospho-(1D-myo-inositol-3-phosphate) + H2O = a 1,2-diacyl-sn-glycero-3-phospho-(1D-myo-inositol) + phosphate. In terms of biological role, lipid phosphatase that specifically dephosphorylates the D-3 position of phosphatidylinositol 3-phosphate and phosphatidylinositol 3,5-bisphosphate, generating phosphatidylinositol and phosphatidylinositol 5-phosphate. The chain is Phosphatidylinositol-3,5-bisphosphate 3-phosphatase MTMR14 from Mus musculus (Mouse).